The chain runs to 409 residues: Phosphatidylserine decarboxylase proenzyme, mitochondrial (409 aa).

The N-terminal 52 residues, 1-52 (MATSVGHRCLGLLHGVAPWRSSLHPCEITALSQSLQPLRKLPFRAFRTDARK), are a transit peptide targeting the mitochondrion. Residues 53-63 (IHTAPARTMFL) lie on the Mitochondrial matrix side of the membrane. The chain crosses the membrane as a helical span at residues 64-82 (LRPVPILLATGGGYAGYRQ). The Mitochondrial intermembrane segment spans residues 83–409 (YEKYRERELE…IRFGEALGSL (327 aa)). Active-site charge relay system; for autoendoproteolytic cleavage activity residues include Asp-191, His-267, and Ser-378. The active-site Schiff-base intermediate with substrate; via pyruvic acid; for decarboxylase activity is Ser-378. Residue Ser-378 is modified to Pyruvic acid (Ser); by autocatalysis.

It belongs to the phosphatidylserine decarboxylase family. PSD-B subfamily. Eukaryotic type I sub-subfamily. In terms of assembly, heterodimer of a large membrane-associated beta subunit and a small pyruvoyl-containing alpha subunit. Pyruvate serves as cofactor. In terms of processing, is synthesized initially as an inactive proenzyme. Formation of the active enzyme involves a self-maturation process in which the active site pyruvoyl group is generated from an internal serine residue via an autocatalytic post-translational modification. Two non-identical subunits are generated from the proenzyme in this reaction, and the pyruvate is formed at the N-terminus of the alpha chain, which is derived from the carboxyl end of the proenzyme. The autoendoproteolytic cleavage occurs by a canonical serine protease mechanism, in which the side chain hydroxyl group of the serine supplies its oxygen atom to form the C-terminus of the beta chain, while the remainder of the serine residue undergoes an oxidative deamination to produce ammonia and the pyruvoyl prosthetic group on the alpha chain. During this reaction, the Ser that is part of the protease active site of the proenzyme becomes the pyruvoyl prosthetic group, which constitutes an essential element of the active site of the mature decarboxylase.

Its subcellular location is the mitochondrion inner membrane. The protein resides in the lipid droplet. The protein localises to the cytoplasm. The enzyme catalyses a 1,2-diacyl-sn-glycero-3-phospho-L-serine + H(+) = a 1,2-diacyl-sn-glycero-3-phosphoethanolamine + CO2. Its pathway is phospholipid metabolism; phosphatidylethanolamine biosynthesis. Its function is as follows. Catalyzes the formation of phosphatidylethanolamine (PtdEtn) from phosphatidylserine (PtdSer). Plays a central role in phospholipid metabolism and in the interorganelle trafficking of phosphatidylserine. May be involved in lipid droplet biogenesis at the endoplasmic reticulum membrane. This chain is Phosphatidylserine decarboxylase proenzyme, mitochondrial, found in Pongo abelii (Sumatran orangutan).